The following is a 334-amino-acid chain: Fructose-1,6-bisphosphatase class 1 (334 aa).

Mg(2+) contacts are provided by Glu92, Asp114, Leu116, and Asp117. Residues 117–120 (DGSS) and Asn209 each bind substrate. A Mg(2+)-binding site is contributed by Glu281.

This sequence belongs to the FBPase class 1 family. As to quaternary structure, homotetramer. The cofactor is Mg(2+).

The protein localises to the cytoplasm. The enzyme catalyses beta-D-fructose 1,6-bisphosphate + H2O = beta-D-fructose 6-phosphate + phosphate. The protein operates within carbohydrate biosynthesis; gluconeogenesis. In Nitrosomonas eutropha (strain DSM 101675 / C91 / Nm57), this protein is Fructose-1,6-bisphosphatase class 1.